Reading from the N-terminus, the 586-residue chain is NudC domain-containing protein 1 (586 aa).

The region spanning 275-364 is the CS domain; it reads KREPLYNWQQ…EPGCTWAELV (90 aa).

Its subcellular location is the cytoplasm. It is found in the nucleus. The chain is NudC domain-containing protein 1 from Xenopus laevis (African clawed frog).